A 146-amino-acid chain; its full sequence is Hemoglobin subunit beta-1 (146 aa).

In terms of domain architecture, Globin spans 2–146 (EWSSNERSTI…VISALSRQYF (145 aa)). Positions 63 and 92 each coordinate heme b.

Belongs to the globin family. Heterotetramer of two alpha chains and two beta chains. In terms of tissue distribution, red blood cells.

Functionally, involved in oxygen transport from gills to the various peripheral tissues. This Muraena helena (Mediterranean moray) protein is Hemoglobin subunit beta-1 (hbb1).